A 611-amino-acid polypeptide reads, in one-letter code: Brain-enriched guanylate kinase-associated protein (611 aa).

At Y156 the chain carries Phosphotyrosine. S219, S248, and S265 each carry phosphoserine. T268 is subject to Phosphothreonine. Residues S284, S364, and S391 each carry the phosphoserine modification. R399 bears the Asymmetric dimethylarginine mark. Residues S474, S484, S494, S496, S519, S521, and S525 each carry the phosphoserine modification. Residues 520 to 611 (LSPSRSADPL…KAQLYGTLLN (92 aa)) are disordered. A compositionally biased stretch (basic and acidic residues) spans 554–563 (EPEHGSRDSL). Phosphoserine is present on residues S571 and S581.

Interacts with DLG4 and DLGAP1 and forms a ternary complex. As to expression, brain-specific. Expressed in neurons and rather enriched at synaptic junctions.

The protein resides in the cytoplasm. It localises to the membrane. May sustain the structure of the postsynaptic density (PSD). In Rattus norvegicus (Rat), this protein is Brain-enriched guanylate kinase-associated protein (Begain).